The chain runs to 529 residues: uncharacterized protein (529 aa).

Basic and acidic residues predominate over residues methionine 1–glutamate 11. Disordered stretches follow at residues methionine 1–serine 222, proline 237–valine 256, alanine 271–proline 372, and glycine 393–threonine 488. Polar residues predominate over residues methionine 27–proline 40. Positions threonine 83 to proline 95 are enriched in basic residues. Residues asparagine 110–alanine 125 are compositionally biased toward polar residues. Serine 128 bears the Phosphoserine mark. Polar residues predominate over residues threonine 170–glycine 199. Serine 217 is subject to Phosphoserine. A compositionally biased stretch (polar residues) spans proline 237–glutamate 249. The segment covering serine 321–alanine 334 has biased composition (low complexity). Positions aspartate 336–isoleucine 362 are enriched in polar residues. The segment covering glutamate 409 to alanine 426 has biased composition (basic and acidic residues). Polar residues predominate over residues alanine 430 to arginine 455. Positions serine 456–serine 470 are enriched in low complexity. Residues isoleucine 471–threonine 488 show a composition bias toward polar residues.

It is found in the cytoplasm. This is an uncharacterized protein from Schizosaccharomyces pombe (strain 972 / ATCC 24843) (Fission yeast).